We begin with the raw amino-acid sequence, 540 residues long: Chaperonin GroEL 1 (540 aa).

Residues 29–32, 86–90, Gly-413, 478–480, and Asp-494 contribute to the ATP site; these read TLGP, DGTTT, and NAA.

This sequence belongs to the chaperonin (HSP60) family. Forms a cylinder of 14 subunits composed of two heptameric rings stacked back-to-back. Interacts with the co-chaperonin GroES.

The protein localises to the cytoplasm. The catalysed reaction is ATP + H2O + a folded polypeptide = ADP + phosphate + an unfolded polypeptide.. In terms of biological role, together with its co-chaperonin GroES, plays an essential role in assisting protein folding. The GroEL-GroES system forms a nano-cage that allows encapsulation of the non-native substrate proteins and provides a physical environment optimized to promote and accelerate protein folding. This Mycobacterium sp. (strain JLS) protein is Chaperonin GroEL 1.